A 264-amino-acid chain; its full sequence is Transmembrane protein 270 (264 aa).

The next 3 membrane-spanning stretches (helical) occupy residues 31–51 (HLYR…LGLA), 74–94 (LSLA…LLLW), and 133–153 (LFLS…LLTW). The span at 227-236 (AQEVKSQETS) shows a compositional bias: polar residues. A disordered region spans residues 227-264 (AQEVKSQETSGPPPQFLIPESSTTESGPLPPQPETPGE). Residues 254–264 (PLPPQPETPGE) are compositionally biased toward pro residues.

In terms of tissue distribution, testis.

It localises to the membrane. This chain is Transmembrane protein 270, found in Mus musculus (Mouse).